A 302-amino-acid chain; its full sequence is Protoheme IX farnesyltransferase (302 aa).

Helical transmembrane passes span 28–48 (LALL…SLDP), 50–70 (MLAL…AFNM), 93–115 (LNPY…SAAA), 119–138 (YVAL…YTQL), 147–167 (IIFG…AAAG), 172–192 (GGVL…WFLG), 219–239 (LIAV…LYYG), 242–262 (FLTA…IGGF), and 271–291 (ALKL…ILPL).

It belongs to the UbiA prenyltransferase family. Protoheme IX farnesyltransferase subfamily.

It localises to the cell membrane. It catalyses the reaction heme b + (2E,6E)-farnesyl diphosphate + H2O = Fe(II)-heme o + diphosphate. It participates in porphyrin-containing compound metabolism; heme O biosynthesis; heme O from protoheme: step 1/1. Functionally, converts heme B (protoheme IX) to heme O by substitution of the vinyl group on carbon 2 of heme B porphyrin ring with a hydroxyethyl farnesyl side group. The sequence is that of Protoheme IX farnesyltransferase from Aeropyrum pernix (strain ATCC 700893 / DSM 11879 / JCM 9820 / NBRC 100138 / K1).